The following is a 244-amino-acid chain: Heat stress transcription factor B-3 (244 aa).

Residues 38–132 (PPPFLVKTYK…LMSNIRRRKS (95 aa)) mediate DNA binding. Residues 173 to 218 (TSSSFVYTALLDENKCLKNENELLSCELGKTKKKCKQLMELVERYR) form a hydrophobic repeat HR-A/B region. Positions 202-208 (KTKKKCK) match the Nuclear localization signal motif. The disordered stretch occupies residues 216–244 (RYRGEDEDATDESDDEEDEGLKLFGVKLE). Residues 220–234 (EDEDATDESDDEEDE) show a composition bias toward acidic residues. Residues 236-243 (LKLFGVKL) carry the Nuclear export signal motif.

This sequence belongs to the HSF family. Class B subfamily. In terms of assembly, homotrimer. Post-translationally, exhibits temperature-dependent phosphorylation.

Its subcellular location is the cytoplasm. The protein resides in the nucleus. Transcriptional regulator that specifically binds DNA sequence 5'-AGAAnnTTCT-3' known as heat shock promoter elements (HSE). This chain is Heat stress transcription factor B-3 (HSFB3), found in Arabidopsis thaliana (Mouse-ear cress).